Here is a 309-residue protein sequence, read N- to C-terminus: Homoserine O-succinyltransferase (309 aa).

The active-site Acyl-thioester intermediate is Cys142. Substrate contacts are provided by Lys163 and Ser192. His235 acts as the Proton acceptor in catalysis. Glu237 is a catalytic residue. Arg249 is a substrate binding site.

The protein belongs to the MetA family. As to quaternary structure, homodimer.

Its subcellular location is the cytoplasm. The enzyme catalyses L-homoserine + succinyl-CoA = O-succinyl-L-homoserine + CoA. It participates in amino-acid biosynthesis; L-methionine biosynthesis via de novo pathway; O-succinyl-L-homoserine from L-homoserine: step 1/1. Transfers a succinyl group from succinyl-CoA to L-homoserine, forming succinyl-L-homoserine. The protein is Homoserine O-succinyltransferase of Escherichia coli O127:H6 (strain E2348/69 / EPEC).